Consider the following 202-residue polypeptide: Uclacyanin-2 (202 aa).

Residues 1 to 29 (MAMNGLSKMAVAAATALLLVLTIVPGAVA) form the signal peptide. Residues 30–126 (VTYTIEWTTG…GMKLAVNVVA (97 aa)) enclose the Phytocyanin domain. Residue histidine 65 coordinates Cu cation. A glycan (N-linked (GlcNAc...) asparagine) is linked at asparagine 86. Cu cation contacts are provided by cysteine 106, histidine 111, and methionine 118. The segment at 129–181 (AGPPATPTPPSSTPGTPTTPESPPSGGSPTPTTPTPGAGSTSPPPPPKASGAS) is disordered. A compositionally biased stretch (low complexity) spans 141-169 (TPGTPTTPESPPSGGSPTPTTPTPGAGST). Serine 178 carries GPI-anchor amidated serine lipidation. Positions 179 to 202 (GASKGVMSYVLVGVSMVLGYGLWM) are cleaved as a propeptide — removed in mature form.

It is found in the cell membrane. Its function is as follows. Probably acts as an electron carrier involved in oxygen activation and/or lignin formation. This is Uclacyanin-2 from Arabidopsis thaliana (Mouse-ear cress).